We begin with the raw amino-acid sequence, 69 residues long: Conotoxin reg3.6 (69 aa).

An N-terminal signal peptide occupies residues Met-1–Ala-20. A propeptide spanning residues Leu-21–Arg-52 is cleaved from the precursor. Disulfide bonds link Cys-54–Cys-68, Cys-55–Cys-66, and Cys-60–Cys-69.

Belongs to the conotoxin M superfamily. In terms of tissue distribution, expressed by the venom duct.

Its subcellular location is the secreted. The protein is Conotoxin reg3.6 of Conus regius (Crown cone).